Here is a 293-residue protein sequence, read N- to C-terminus: Mitochondrial glycine transporter (293 aa).

Solcar repeat units lie at residues 6–85 (GGVP…SRSA), 102–186 (LQSY…AKEM), and 208–291 (ASAM…LLKL). 6 helical membrane-spanning segments follow: residues 12–37 (LVSG…TRLQ), 60–86 (GTLP…RSAL), 108–133 (LLTG…VRYE), 161–184 (GAAA…EQAK), 212–238 (VNGV…KTRM), and 266–284 (GLSL…AWGI).

This sequence belongs to the mitochondrial carrier (TC 2.A.29) family. SLC25A38 subfamily.

Its subcellular location is the mitochondrion inner membrane. It carries out the reaction glycine(in) = glycine(out). In terms of biological role, mitochondrial glycine transporter that imports glycine into the mitochondrial matrix. Plays an important role in providing glycine for the first enzymatic step in heme biosynthesis, the condensation of glycine with succinyl-CoA to produce 5-aminolevulinate (ALA) in the mitochondrial matrix. The polypeptide is Mitochondrial glycine transporter (Eremothecium gossypii (strain ATCC 10895 / CBS 109.51 / FGSC 9923 / NRRL Y-1056) (Yeast)).